An 810-amino-acid chain; its full sequence is Exocyst complex component 6B (810 aa).

Residues 79 to 118 (TELLKVRGEAQKLKNQVTDTNRKLQHEGKELVIAMEELKQ) adopt a coiled-coil conformation. Positions 258-282 (ESTSPKSEQDSGILDVEDEEDDEEV) are disordered. Acidic residues predominate over residues 272 to 282 (DVEDEEDDEEV).

Belongs to the SEC15 family. In terms of assembly, the exocyst complex is composed of SEC3, SEC5, SEC6, SEC8, SEC10, SEC15, EXO70 and EXO84.

Its function is as follows. Component of the exocyst complex involved in the docking of exocytic vesicles with fusion sites on the plasma membrane. In Mus musculus (Mouse), this protein is Exocyst complex component 6B (Exoc6b).